The sequence spans 435 residues: MYGRNFPFFNSLGGFYPRGNGFPLDAPSLDPRKPSGTGYTSKVRVRDKYRIVGFISSGTYGRVYKAIGKNGEKREFAIKKFKPDKEGEIIQYTGLSQSAIREMSLCSELDHPNVVQLEEIILEDKCIFMVFEYTEHDLLQIIHHHTQPQRHAIPAPMVRSILFQLLNGLLYLHTNWVLHRDLKPANILVTSSGAIRVGDLGLARLFYKPLNSLFSGDKVVVTIWYRAPELLMGSRHYTPAVDLWAVGCIFAELLSLRPIFKGEEAKMDSKKTVPFQRNQMMKIIEIMGLPTKEIWPGITSMPEFSQLQSLAMSRAPHFNRSSNLENWYQSCLKNGGYSANSSAGTPGADGFDLLSRLLEYDPTKRITAREALEHPYFKNGGPISANCFEGFEGKYPHRRVTQDDNDIRSGSLPGTKRSGLPDDSLMGRASKRIKE.

The Protein kinase domain maps to 49 to 377 (YRIVGFISSG…AREALEHPYF (329 aa)). Residues 55–63 (ISSGTYGRV) and K79 each bind ATP. D181 (proton acceptor) is an active-site residue. A compositionally biased stretch (basic and acidic residues) spans 398 to 407 (RRVTQDDNDI). The interval 398-435 (RRVTQDDNDIRSGSLPGTKRSGLPDDSLMGRASKRIKE) is disordered.

Belongs to the protein kinase superfamily. CMGC Ser/Thr protein kinase family. CDC2/CDKX subfamily. As to quaternary structure, component of the srb8-11 complex, a regulatory module of the Mediator complex. Mg(2+) serves as cofactor.

It localises to the nucleus. It carries out the reaction L-seryl-[protein] + ATP = O-phospho-L-seryl-[protein] + ADP + H(+). The enzyme catalyses L-threonyl-[protein] + ATP = O-phospho-L-threonyl-[protein] + ADP + H(+). It catalyses the reaction [DNA-directed RNA polymerase] + ATP = phospho-[DNA-directed RNA polymerase] + ADP + H(+). Component of the srb8-11 complex. The srb8-11 complex is a regulatory module of the Mediator complex which is itself involved in regulation of basal and activated RNA polymerase II-dependent transcription. The srb8-11 complex may be involved in the transcriptional repression of a subset of genes regulated by Mediator. It may inhibit the association of the Mediator complex with RNA polymerase II to form the holoenzyme complex. The srb8-11 complex phosphorylates the C-terminal domain (CTD) of the largest subunit of RNA polymerase II. In Aspergillus terreus (strain NIH 2624 / FGSC A1156), this protein is Serine/threonine-protein kinase ssn3 (ssn3).